The sequence spans 332 residues: MTKITVFGMGSFGTALANVLAENGHTVLMWGKNEDSVKELNDHHQNKRYLKDVVLDSRIKATSDIKEAANFTDIYLMALPTKAMREVTSEIDSLIDSKKTFIHVAKGIENDTFKRVSEMIEDSISEDHNGGIGVLSGPSHAEEVVIKQPTTVAASSKDEKVSKLIQDLFMNDYLRVYTNNDLVGVELGGALKNIIAVASGIVAGMGYGDNAKAALMTRGLAEISRLGEKLGADPMTFLGLGGIGDLIVTCTSTHSRNYTLGFKLGQGQTMDEALNEMNMVVEGIYTTNSVYHLAKQQNVDMPITNALYKVLFEDNPVKDSVKDLMGRDKKSE.

Residues serine 11, phenylalanine 12, lysine 32, and lysine 106 each coordinate NADPH. Residues lysine 106, glycine 137, and serine 139 each coordinate sn-glycerol 3-phosphate. Alanine 141 contributes to the NADPH binding site. Residues lysine 192, aspartate 245, serine 255, arginine 256, and asparagine 257 each coordinate sn-glycerol 3-phosphate. Lysine 192 serves as the catalytic Proton acceptor. Arginine 256 serves as a coordination point for NADPH. The NADPH site is built by valine 280 and glutamate 282.

This sequence belongs to the NAD-dependent glycerol-3-phosphate dehydrogenase family.

It localises to the cytoplasm. The catalysed reaction is sn-glycerol 3-phosphate + NAD(+) = dihydroxyacetone phosphate + NADH + H(+). It catalyses the reaction sn-glycerol 3-phosphate + NADP(+) = dihydroxyacetone phosphate + NADPH + H(+). The protein operates within membrane lipid metabolism; glycerophospholipid metabolism. In terms of biological role, catalyzes the reduction of the glycolytic intermediate dihydroxyacetone phosphate (DHAP) to sn-glycerol 3-phosphate (G3P), the key precursor for phospholipid synthesis. The sequence is that of Glycerol-3-phosphate dehydrogenase [NAD(P)+] from Staphylococcus haemolyticus (strain JCSC1435).